Consider the following 224-residue polypeptide: LexA repressor (224 aa).

The segment at residues 41–61 is a DNA-binding region (H-T-H motif); it reads MREIGDAVGLSSLSSVTHQLN. Active-site for autocatalytic cleavage activity residues include Ser-148 and Lys-185.

The protein belongs to the peptidase S24 family. In terms of assembly, homodimer.

The catalysed reaction is Hydrolysis of Ala-|-Gly bond in repressor LexA.. In terms of biological role, represses a number of genes involved in the response to DNA damage (SOS response), including recA and lexA. In the presence of single-stranded DNA, RecA interacts with LexA causing an autocatalytic cleavage which disrupts the DNA-binding part of LexA, leading to derepression of the SOS regulon and eventually DNA repair. The chain is LexA repressor from Leifsonia xyli subsp. xyli (strain CTCB07).